Consider the following 169-residue polypeptide: Disulfide bond formation protein B (169 aa).

The Cytoplasmic segment spans residues 1–14; it reads MSNDTFYLKREKRF. A helical membrane pass occupies residues 15–31; that stretch reads LVLLGIICLSLIGGALY. Topologically, residues 32–49 are periplasmic; that stretch reads MQIALGEAPCPLCILQRY. Cysteine 41 and cysteine 44 are oxidised to a cystine. Residues 50 to 64 traverse the membrane as a helical segment; sequence ALLFIAIFAFIGAAM. Over 65-71 the chain is Cytoplasmic; it reads NGRRGVT. A helical transmembrane segment spans residues 72 to 89; sequence VFEALVTLSALCGIAAAG. Residues 90 to 144 are Periplasmic-facing; sequence RHAWILAHPSDSCGIDILQPIVDGLPLATLFPTGFQVSGFCTTPYPPVLGLSLAQ. Residues cysteine 102 and cysteine 130 are joined by a disulfide bond. The helical transmembrane segment at 145 to 163 threads the bilayer; the sequence is WALTAFVLTAILVPACIIR. Residues 164 to 169 are Cytoplasmic-facing; sequence NRRKPY.

This sequence belongs to the DsbB family.

The protein localises to the cell inner membrane. Functionally, required for disulfide bond formation in some periplasmic proteins. Acts by oxidizing the DsbA protein. This Pseudomonas syringae pv. tomato (strain ATCC BAA-871 / DC3000) protein is Disulfide bond formation protein B.